A 78-amino-acid polypeptide reads, in one-letter code: MKVSSHEMVPEHEIIPGDEIPFLLEKYGIKIQQFPKLLISDPLVIEVGAKVGDIVKITRKSQTAGETVYFRLVVSNSV.

The protein belongs to the archaeal Rpo5/eukaryotic RPB5 RNA polymerase subunit family. In terms of assembly, part of the RNA polymerase complex.

The protein resides in the cytoplasm. The catalysed reaction is RNA(n) + a ribonucleoside 5'-triphosphate = RNA(n+1) + diphosphate. Its function is as follows. DNA-dependent RNA polymerase (RNAP) catalyzes the transcription of DNA into RNA using the four ribonucleoside triphosphates as substrates. The sequence is that of DNA-directed RNA polymerase subunit Rpo5 from Methanococcus vannielii (strain ATCC 35089 / DSM 1224 / JCM 13029 / OCM 148 / SB).